Here is a 378-residue protein sequence, read N- to C-terminus: Quinolinate synthase (378 aa).

The iminosuccinate site is built by His59 and Ser80. [4Fe-4S] cluster is bound at residue Cys125. Iminosuccinate contacts are provided by residues 151 to 153 (YAN) and Ser168. Cys212 provides a ligand contact to [4Fe-4S] cluster. Iminosuccinate is bound by residues 238–240 (HPE) and Thr255. Residue Cys309 coordinates [4Fe-4S] cluster.

The protein belongs to the quinolinate synthase family. Type 1 subfamily. It depends on [4Fe-4S] cluster as a cofactor.

It localises to the cytoplasm. It catalyses the reaction iminosuccinate + dihydroxyacetone phosphate = quinolinate + phosphate + 2 H2O + H(+). The protein operates within cofactor biosynthesis; NAD(+) biosynthesis; quinolinate from iminoaspartate: step 1/1. Functionally, catalyzes the condensation of iminoaspartate with dihydroxyacetone phosphate to form quinolinate. This chain is Quinolinate synthase, found in Burkholderia orbicola (strain MC0-3).